A 469-amino-acid polypeptide reads, in one-letter code: MNPNQKIITIGSVSLTIATACSLMQIAILATTVTLHFKQHECDSPASNQVMPCEPIIIERNITEIVYLNNTTIEKEICPEVVEYRNWSKPQCQITGFAPFSKDNSIRLSAGGDIWVTREPYVSCDPGKCYQFALGQGTTLDNKHSNGTIHDRIPHRTLLMNELGVPFHLGTKQVCVAWSSSSCHDGKAWLHVCVTGDDRNATASFIYDGRLVDSIGSWSQNILRTQESECVCINGTCTVVMTDGSASGRADTRILFIKEGKIVHISPLSGSAQHIEECSCYPRYPDVRCICRDNWKGSNRPVIDINMEDYSIDSSYVCSGLVGDTPRNDDSSSNSNCRDPNNERGNPGVKGWAFDNGDDVWMGRTISKDSRSGYETFKVIGGWSTPNSKSQVNRQVIVDNNNWSGYSGIFSVEGKSCINRCFYVELIRGRPQETRVWWTSNSIVVFCGTSGTYGTGSWPDGANINFMPI.

The Intravirion portion of the chain corresponds to 1–6 (MNPNQK). Residues 7 to 29 (IITIGSVSLTIATACSLMQIAIL) traverse the membrane as a helical segment. Residues 11–33 (GSVSLTIATACSLMQIAILATTV) are involved in apical transport and lipid raft association. Topologically, residues 30 to 469 (ATTVTLHFKQ…DGANINFMPI (440 aa)) are virion surface. The segment at 36–88 (HFKQHECDSPASNQVMPCEPIIIERNITEIVYLNNTTIEKEICPEVVEYRNWS) is hypervariable stalk region. N-linked (GlcNAc...) asparagine; by host glycans are attached at residues Asn-61, Asn-69, Asn-70, and Asn-86. Residues 91 to 469 (QCQITGFAPF…DGANINFMPI (379 aa)) form a head of neuraminidase region. Disulfide bonds link Cys-92–Cys-417, Cys-124–Cys-129, Cys-183–Cys-230, Cys-232–Cys-237, Cys-278–Cys-291, Cys-280–Cys-289, Cys-318–Cys-337, and Cys-421–Cys-447. Arg-118 serves as a coordination point for substrate. The N-linked (GlcNAc...) asparagine; by host glycan is linked to Asn-146. Catalysis depends on Asp-151, which acts as the Proton donor/acceptor. Arg-152 is a substrate binding site. Asn-200 and Asn-234 each carry an N-linked (GlcNAc...) asparagine; by host glycan. 276 to 277 (EE) is a binding site for substrate. Arg-292 is a substrate binding site. Positions 293, 297, and 324 each coordinate Ca(2+). The tract at residues 325–349 (TPRNDDSSSNSNCRDPNNERGNPGV) is disordered. Residue Arg-371 coordinates substrate. N-linked (GlcNAc...) asparagine; by host glycosylation is present at Asn-402. The active-site Nucleophile is the Tyr-406.

Belongs to the glycosyl hydrolase 34 family. Homotetramer. Ca(2+) serves as cofactor. Post-translationally, N-glycosylated.

The protein resides in the virion membrane. It localises to the host apical cell membrane. It carries out the reaction Hydrolysis of alpha-(2-&gt;3)-, alpha-(2-&gt;6)-, alpha-(2-&gt;8)- glycosidic linkages of terminal sialic acid residues in oligosaccharides, glycoproteins, glycolipids, colominic acid and synthetic substrates.. Its activity is regulated as follows. Inhibited by the neuraminidase inhibitors zanamivir (Relenza) and oseltamivir (Tamiflu). These drugs interfere with the release of progeny virus from infected cells and are effective against all influenza strains. Resistance to neuraminidase inhibitors is quite rare. Catalyzes the removal of terminal sialic acid residues from viral and cellular glycoconjugates. Cleaves off the terminal sialic acids on the glycosylated HA during virus budding to facilitate virus release. Additionally helps virus spread through the circulation by further removing sialic acids from the cell surface. These cleavages prevent self-aggregation and ensure the efficient spread of the progeny virus from cell to cell. Otherwise, infection would be limited to one round of replication. Described as a receptor-destroying enzyme because it cleaves a terminal sialic acid from the cellular receptors. May facilitate viral invasion of the upper airways by cleaving the sialic acid moieties on the mucin of the airway epithelial cells. Likely to plays a role in the budding process through its association with lipid rafts during intracellular transport. May additionally display a raft-association independent effect on budding. Plays a role in the determination of host range restriction on replication and virulence. Sialidase activity in late endosome/lysosome traffic seems to enhance virus replication. This chain is Neuraminidase, found in Aves (Human).